The sequence spans 231 residues: Probable septum site-determining protein MinC (231 aa).

The interval 101-125 is disordered; the sequence is GKEKAPRPAPTPQAPAQNTTPVTKT. The span at 114 to 123 shows a compositional bias: low complexity; sequence APAQNTTPVT.

It belongs to the MinC family. Interacts with MinD and FtsZ.

Cell division inhibitor that blocks the formation of polar Z ring septums. Rapidly oscillates between the poles of the cell to destabilize FtsZ filaments that have formed before they mature into polar Z rings. Prevents FtsZ polymerization. In Escherichia coli (strain ATCC 8739 / DSM 1576 / NBRC 3972 / NCIMB 8545 / WDCM 00012 / Crooks), this protein is Probable septum site-determining protein MinC.